The following is a 399-amino-acid chain: Phosphoglycerate kinase (399 aa).

Residues 22–24 (DFN), Arg-38, 61–64 (HLGR), Arg-120, and Arg-153 each bind substrate. ATP-binding positions include Lys-204, Glu-326, and 352–355 (GGDT).

It belongs to the phosphoglycerate kinase family. Monomer.

It localises to the cytoplasm. The catalysed reaction is (2R)-3-phosphoglycerate + ATP = (2R)-3-phospho-glyceroyl phosphate + ADP. It participates in carbohydrate degradation; glycolysis; pyruvate from D-glyceraldehyde 3-phosphate: step 2/5. The sequence is that of Phosphoglycerate kinase from Geobacter sp. (strain M21).